A 603-amino-acid chain; its full sequence is Peroxisomal targeting signal receptor (603 aa).

Cys-10 participates in a covalent cross-link: Glycyl cysteine thioester (Cys-Gly) (interchain with G-Cter in ubiquitin). An amphipathic helix 1 (AH1) region spans residues 11–33 (SANSNAIAQFNKHTQQDRSLQRQ). Lys-22 is covalently cross-linked (Glycyl lysine isopeptide (Lys-Gly) (interchain with G-Cter in ubiquitin)). Residues 23-49 (HTQQDRSLQRQAANQQGIVQNGQGFKK) form a disordered region. Polar residues predominate over residues 31–45 (QRQAANQQGIVQNGQ). Positions 58 to 76 (RQNMDQFMNNGPSQSNFQF) are amphipathic helix 2 (AH2). Short sequence motifs (wxxxF/Y motif) lie at residues 99–103 (WTNEF), 128–132 (WATEF), and 192–196 (WDNQF). Residues 232–248 (FQEVWDSLNSEEVENDF) are amphipathic helix 4 (AH4). The WxxxF/Y motif 4 signature appears at 271–275 (WEKDF). TPR repeat units lie at residues 304–338 (ESDP…NEGH), 339–372 (INAW…HPEN), 449–482 (PDVQ…KPDD), 484–516 (VLWN…KPTF), and 518–550 (RARY…HQVE).

The protein belongs to the peroxisomal targeting signal receptor family. In terms of assembly, interacts (via WxxxF/Y and LVxEF motifs) with PEX14; promoting translocation through the PEX13-PEX14 docking complex. Monoubiquitinated at Cys-10 by PEX2 during PEX5 passage through the retrotranslocation channel: monoubiquitination acts as a signal for PEX5 extraction and is required for proper export from peroxisomes and recycling. When PEX5 recycling is compromised, polyubiquitinated at Lys-22 by PEX10 during its passage through the retrotranslocation channel, leading to its degradation.

The protein localises to the cytoplasm. It is found in the cytosol. The protein resides in the peroxisome matrix. Its function is as follows. Receptor that mediates peroxisomal import of proteins containing a C-terminal PTS1-type tripeptide peroxisomal targeting signal (SKL-type). Binds to cargo proteins containing a PTS1 peroxisomal targeting signal in the cytosol, and translocates them into the peroxisome matrix by passing through the PEX13-PEX14 docking complex along with cargo proteins. PEX5 receptor is then retrotranslocated into the cytosol, leading to release of bound cargo in the peroxisome matrix, and reset for a subsequent peroxisome import cycle. The polypeptide is Peroxisomal targeting signal receptor (PEX5) (Debaryomyces hansenii (strain ATCC 36239 / CBS 767 / BCRC 21394 / JCM 1990 / NBRC 0083 / IGC 2968) (Yeast)).